The following is a 67-amino-acid chain: DNA-directed RNA polymerase subunit omega (67 aa).

It belongs to the RNA polymerase subunit omega family. The RNAP catalytic core consists of 2 alpha, 1 beta, 1 beta' and 1 omega subunit. When a sigma factor is associated with the core the holoenzyme is formed, which can initiate transcription.

The catalysed reaction is RNA(n) + a ribonucleoside 5'-triphosphate = RNA(n+1) + diphosphate. In terms of biological role, promotes RNA polymerase assembly. Latches the N- and C-terminal regions of the beta' subunit thereby facilitating its interaction with the beta and alpha subunits. This Listeria welshimeri serovar 6b (strain ATCC 35897 / DSM 20650 / CCUG 15529 / CIP 8149 / NCTC 11857 / SLCC 5334 / V8) protein is DNA-directed RNA polymerase subunit omega.